Consider the following 384-residue polypeptide: Lipid-A-disaccharide synthase 1 (384 aa).

This sequence belongs to the LpxB family.

It carries out the reaction a lipid X + a UDP-2-N,3-O-bis[(3R)-3-hydroxyacyl]-alpha-D-glucosamine = a lipid A disaccharide + UDP + H(+). The protein operates within bacterial outer membrane biogenesis; LPS lipid A biosynthesis. Condensation of UDP-2,3-diacylglucosamine and 2,3-diacylglucosamine-1-phosphate to form lipid A disaccharide, a precursor of lipid A, a phosphorylated glycolipid that anchors the lipopolysaccharide to the outer membrane of the cell. This chain is Lipid-A-disaccharide synthase 1, found in Legionella pneumophila subsp. pneumophila (strain Philadelphia 1 / ATCC 33152 / DSM 7513).